The sequence spans 203 residues: 5-formyltetrahydrofolate cyclo-ligase (203 aa).

The residue at position 2 (Ala2) is an N-acetylalanine. ATP contacts are provided by residues 10-14 (KRSLR) and Arg14. Residues Leu56, Glu61, and 148-152 (RGKGY) each bind substrate. 145 to 153 (RLGRGKGYY) is a binding site for ATP. Mg(2+) is bound by residues Asp154 and Asp189.

It belongs to the 5-formyltetrahydrofolate cyclo-ligase family. As to quaternary structure, monomer. The cofactor is Mg(2+).

The protein resides in the cytoplasm. It carries out the reaction (6S)-5-formyl-5,6,7,8-tetrahydrofolate + ATP = (6R)-5,10-methenyltetrahydrofolate + ADP + phosphate. Functionally, contributes to tetrahydrofolate metabolism. Helps regulate carbon flow through the folate-dependent one-carbon metabolic network that supplies carbon for the biosynthesis of purines, thymidine and amino acids. Catalyzes the irreversible conversion of 5-formyltetrahydrofolate (5-FTHF) to yield 5,10-methenyltetrahydrofolate. The polypeptide is 5-formyltetrahydrofolate cyclo-ligase (MTHFS) (Homo sapiens (Human)).